The primary structure comprises 178 residues: Interleukin-10 (178 aa).

An N-terminal signal peptide occupies residues 1–18 (MPGSALLCCLLLLAGVKT). The N-linked (GlcNAc...) asparagine glycan is linked to Asn-29. 2 disulfide bridges follow: Cys-30–Cys-126 and Cys-80–Cys-132. Residue Asn-134 is glycosylated (N-linked (GlcNAc...) asparagine).

The protein belongs to the IL-10 family. As to quaternary structure, homodimer. Interacts with IL10RA and IL10RB.

Its subcellular location is the secreted. Functionally, major immune regulatory cytokine that acts on many cells of the immune system where it has profound anti-inflammatory functions, limiting excessive tissue disruption caused by inflammation. Mechanistically, IL10 binds to its heterotetrameric receptor comprising IL10RA and IL10RB leading to JAK1 and STAT2-mediated phosphorylation of STAT3. In turn, STAT3 translocates to the nucleus where it drives expression of anti-inflammatory mediators. Targets antigen-presenting cells (APCs) such as macrophages and monocytes and inhibits their release of pro-inflammatory cytokines including granulocyte-macrophage colony-stimulating factor /GM-CSF, granulocyte colony-stimulating factor/G-CSF, IL-1 alpha, IL-1 beta, IL-6, IL-8 and TNF-alpha. Also interferes with antigen presentation by reducing the expression of MHC-class II and co-stimulatory molecules, thereby inhibiting their ability to induce T cell activation. In addition, controls the inflammatory response of macrophages by reprogramming essential metabolic pathways including mTOR signaling. The chain is Interleukin-10 (Il10) from Rattus norvegicus (Rat).